We begin with the raw amino-acid sequence, 299 residues long: ATP phosphoribosyltransferase (299 aa).

The protein belongs to the ATP phosphoribosyltransferase family. Long subfamily. Equilibrium between an active dimeric form, an inactive hexameric form and higher aggregates. Interconversion between the various forms is largely reversible and is influenced by the natural substrates and inhibitors of the enzyme. Requires Mg(2+) as cofactor.

Its subcellular location is the cytoplasm. The enzyme catalyses 1-(5-phospho-beta-D-ribosyl)-ATP + diphosphate = 5-phospho-alpha-D-ribose 1-diphosphate + ATP. It participates in amino-acid biosynthesis; L-histidine biosynthesis; L-histidine from 5-phospho-alpha-D-ribose 1-diphosphate: step 1/9. Its activity is regulated as follows. Feedback inhibited by histidine. Catalyzes the condensation of ATP and 5-phosphoribose 1-diphosphate to form N'-(5'-phosphoribosyl)-ATP (PR-ATP). Has a crucial role in the pathway because the rate of histidine biosynthesis seems to be controlled primarily by regulation of HisG enzymatic activity. In Escherichia coli O7:K1 (strain IAI39 / ExPEC), this protein is ATP phosphoribosyltransferase.